Reading from the N-terminus, the 442-residue chain is Topoisomerase I damage affected protein 11 (442 aa).

Residues glutamate 16–aspartate 31 show a composition bias toward basic and acidic residues. Disordered stretches follow at residues glutamate 16 to tryptophan 138, glutamate 151 to valine 194, glycine 298 to serine 328, and leucine 354 to glycine 379. The segment covering glycine 42 to glycine 55 has biased composition (low complexity). Polar residues-rich tracts occupy residues arginine 56–aspartate 76, valine 110–threonine 121, and lysine 155–proline 176. Residues serine 183–lysine 192 are compositionally biased toward basic and acidic residues. A coiled-coil region spans residues arginine 270–glutamine 300.

Belongs to the TDA11 family.

The protein localises to the cytoplasm. The polypeptide is Topoisomerase I damage affected protein 11 (TDA11) (Kluyveromyces lactis (strain ATCC 8585 / CBS 2359 / DSM 70799 / NBRC 1267 / NRRL Y-1140 / WM37) (Yeast)).